The chain runs to 935 residues: Auxin response factor 6 (935 aa).

The TF-B3 DNA-binding region spans 129–231 (FCKTLTASDT…QLLLGIRRAN (103 aa)). 2 disordered regions span residues 536-624 (QAYL…PLHT) and 645-714 (SAMT…SASD). 2 stretches are compositionally biased toward low complexity: residues 546–565 (QPQS…QQQQ) and 573–582 (SASSAAVVSA). Composition is skewed to polar residues over residues 583–624 (MSQF…PLHT) and 661–689 (SSFQ…SNVP). The PB1 domain occupies 796–880 (NTFVKVYKSG…WCIKILSPQE (85 aa)). Over residues 896-909 (PSSNNVDKLPSNGN) the composition is skewed to polar residues. Residues 896–917 (PSSNNVDKLPSNGNCDDFGNRS) are disordered.

The protein belongs to the ARF family. As to quaternary structure, homodimers and heterodimers. Expressed in the whole plant.

The protein resides in the nucleus. Its function is as follows. Auxin response factors (ARFs) are transcriptional factors that bind specifically to the DNA sequence 5'-TGTCTC-3' found in the auxin-responsive promoter elements (AuxREs). Seems to act as transcriptional activator. Formation of heterodimers with Aux/IAA proteins may alter their ability to modulate early auxin response genes expression. Regulates both stamen and gynoecium maturation. Promotes jasmonic acid production. Partially redundant with ARF8. This Arabidopsis thaliana (Mouse-ear cress) protein is Auxin response factor 6 (ARF6).